The sequence spans 130 residues: DNA-binding protein HU (130 aa).

This sequence belongs to the bacterial histone-like protein family.

Histone-like DNA-binding protein which is capable of wrapping DNA to stabilize it, and thus to prevent its denaturation under extreme environmental conditions. The chain is DNA-binding protein HU (hup) from Ureaplasma parvum serovar 3 (strain ATCC 700970).